A 264-amino-acid polypeptide reads, in one-letter code: Regulatory protein RecX (264 aa).

Belongs to the RecX family.

The protein resides in the cytoplasm. Its function is as follows. Modulates RecA activity. The chain is Regulatory protein RecX from Limosilactobacillus reuteri (strain DSM 20016) (Lactobacillus reuteri).